Reading from the N-terminus, the 263-residue chain is Kallikrein 1-related peptidase b27 (263 aa).

An N-terminal signal peptide occupies residues 1–17; that stretch reads MRFLILFLALSLGGIDA. Residues 18-24 constitute a propeptide, activation peptide; the sequence is APPVQSR. Positions 25-260 constitute a Peptidase S1 domain; the sequence is IIGGFKCKKN…FTSWIKDTMA (236 aa). Cystine bridges form between Cys31–Cys175, Cys50–Cys66, Cys154–Cys221, Cys186–Cys200, and Cys211–Cys236. His65 acts as the Charge relay system in catalysis. Residues Asn69 and Asn105 are each glycosylated (N-linked (GlcNAc...) asparagine). Asp122 acts as the Charge relay system in catalysis. Residue Ser215 is the Charge relay system of the active site.

The protein belongs to the peptidase S1 family. Kallikrein subfamily. As to expression, expressed in testis and submaxillary gland. Not expressed in heart, brain, spleen, lung, liver, muscle, kidney and ovary. In the testis, expression localized specifically to Leydig cells in the interstitial tissues.

With respect to regulation, strongly inhibited by protease inhibitors diisopropyl fluorophosphate, phenylmethanesulfonyl fluoride and SBTI. In terms of biological role, serine protease with chymotrypsin-like cleavage specificity. Shows activity towards casein, gelatin, IGFBP3 and fibronectin but not towards laminin or collagens I and IV. Does not hydrolyze kininogin to release Lys-bradykinin. This Mus musculus (Mouse) protein is Kallikrein 1-related peptidase b27 (Klk1b27).